The following is a 134-amino-acid chain: Prefoldin subunit alpha (134 aa).

The protein belongs to the prefoldin subunit alpha family. Heterohexamer of two alpha and four beta subunits.

The protein localises to the cytoplasm. Its function is as follows. Molecular chaperone capable of stabilizing a range of proteins. Seems to fulfill an ATP-independent, HSP70-like function in archaeal de novo protein folding. This is Prefoldin subunit alpha from Pyrobaculum calidifontis (strain DSM 21063 / JCM 11548 / VA1).